A 326-amino-acid polypeptide reads, in one-letter code: Olfactory receptor 8A1 (326 aa).

The Extracellular portion of the chain corresponds to 1-45 (MGFLSPMHPCRPPTQRRMAAGNHSTVTEFILKGLTKRADLQLPLF). An N-linked (GlcNAc...) asparagine glycan is attached at Asn-22. A helical membrane pass occupies residues 46 to 66 (LLFLGIYLVTIVGNLGMITLI). Residues 67–77 (CLNSQLHTPMY) are Cytoplasmic-facing. Residues 78-100 (YFLSNLSLMDLCYSSVITPKMLV) form a helical membrane-spanning segment. The Extracellular portion of the chain corresponds to 101-116 (NFVSEKNIISYAGCMS). Cys-114 and Cys-195 form a disulfide bridge. Residues 117–137 (QLYFFLVFVIAECYMLTVMAY) form a helical membrane-spanning segment. The Cytoplasmic portion of the chain corresponds to 138-150 (DRYVAICHPLLYN). The chain crosses the membrane as a helical span at residues 151 to 171 (IIMSHHTCLLLVAVVYAIGLI). The Extracellular segment spans residues 172–222 (GSTIETGLMLKLPYCEHLISHYFCDILPLMKLSCSSTYDVEMTVFFSAGFN). A helical transmembrane segment spans residues 223–243 (IIVTSLTVLVSYTFILSSILG). Residues 244–260 (ISTTEGRSKAFSTCSSH) are Cytoplasmic-facing. The chain crosses the membrane as a helical span at residues 261 to 281 (LAAVGMFYGSTAFMYLKPSTI). At 282–287 (SSLTQE) the chain is on the extracellular side. Residues 288–308 (NVASVFYTTVIPMLNPLIYSL) form a helical membrane-spanning segment. Residues 309–326 (RNKEVKAAVQKTLRGKLF) are Cytoplasmic-facing.

This sequence belongs to the G-protein coupled receptor 1 family.

It is found in the cell membrane. Functionally, odorant receptor. This chain is Olfactory receptor 8A1 (OR8A1), found in Homo sapiens (Human).